We begin with the raw amino-acid sequence, 814 residues long: Syn-copalyl diphosphate synthase TPS3, chloroplastic (814 aa).

A chloroplast-targeting transit peptide spans 1 to 52 (MCSLSTLSPNFSNAYGSKSVSSTASRFPCWQRSNETWKTQSREVIHWTYVVR). Lys248 is a substrate binding site. Mg(2+) contacts are provided by Asp386 and Asp388. A DXDD motif motif is present at residues 386–389 (DIDD). Lys472 lines the substrate pocket.

This sequence belongs to the terpene synthase family. It depends on Mg(2+) as a cofactor. As to expression, mostly expressed in trichomes of leaves and fruits.

Its subcellular location is the plastid. It is found in the chloroplast. It catalyses the reaction (2E,6E,10E)-geranylgeranyl diphosphate = 9alpha-copalyl diphosphate. It functions in the pathway secondary metabolite biosynthesis; terpenoid biosynthesis. Its function is as follows. Involved in the biosynthesis of labdane-type diterpenoid including cleroda-dienols, and peregrinol lactones and furan derivatives, dopaminergic diterpenoids that can bind to dopamine receptors in the human pituitary gland, have probably ability to lower prolactin levels, and are used to treat menstrual cycle disorders (e.g. premenstrual syndrome and mastodynia). Terpene synthase that produces syn-copalyl diphosophate from geranylgeranyl diphosphate (GGPP). This Vitex agnus-castus (Chaste tree) protein is Syn-copalyl diphosphate synthase TPS3, chloroplastic.